Here is a 533-residue protein sequence, read N- to C-terminus: MKQIWQALKAHQQAVEHRPILDLFADPRRAESFSTRLDDMLFDWSKTNIDHTARDLLIDLAGAAGVSQKRDAMFAGRKINETEGRAVLHTALRNMDRPVLVEGQDVAAGLRETHARMQAFAHDLREGLFTGQGGRITDVVNIGIGGSDLGPAMACLALAPYADGPRCHFVSNVDGAHIHDTLKDLDPATTLVIVASKTFTTIETMTNAETARRWMEGRVANPAAQFAAVSTAADRTAAFGIDASRVFGFEDWVGGRYSMWGPIGLSLMIAIGPEDFDAFLSGGAAMDRHFREAPFAENLPVLLALVGIWHNQICGHATRAVLPYDQRLARLPAYLQQLEMESNGKRVAMDGHELALHSGPIVWGEPGTNGQHAFYQLIHQGTRVVPCEFLVARDGHEPDLAHQHLLLVSNCLAQSEALLRGRSLDEARAILAKKGVTGTELERQARHRVFPGNRPSTTLAYPKLTPAMLGRIIALYEHRVFVEGVILGINSYDQWGVELGKELAIALQPMLEGRAGTEGKDGSTRQLIDFLGR.

The Proton donor role is filled by E341. Active-site residues include H372 and K501.

It belongs to the GPI family.

It is found in the cytoplasm. The enzyme catalyses alpha-D-glucose 6-phosphate = beta-D-fructose 6-phosphate. It participates in carbohydrate biosynthesis; gluconeogenesis. It functions in the pathway carbohydrate degradation; glycolysis; D-glyceraldehyde 3-phosphate and glycerone phosphate from D-glucose: step 2/4. Functionally, catalyzes the reversible isomerization of glucose-6-phosphate to fructose-6-phosphate. This chain is Glucose-6-phosphate isomerase, found in Cereibacter sphaeroides (strain ATCC 17025 / ATH 2.4.3) (Rhodobacter sphaeroides).